Consider the following 71-residue polypeptide: Small ribosomal subunit protein bS21 (71 aa).

This sequence belongs to the bacterial ribosomal protein bS21 family.

The protein is Small ribosomal subunit protein bS21 of Shewanella piezotolerans (strain WP3 / JCM 13877).